The chain runs to 443 residues: 26S proteasome regulatory subunit 4 homolog A (443 aa).

Disordered regions lie at residues Met1 to Val55 and Arg87 to Thr108. Basic and acidic residues-rich tracts occupy residues Gln12–Glu28 and Arg87–Arg106. Position 229 to 236 (Gly229 to Thr236) interacts with ATP. Residues Lys296 and Lys433 each participate in a glycyl lysine isopeptide (Lys-Gly) (interchain with G-Cter in ubiquitin) cross-link.

It belongs to the AAA ATPase family. As to quaternary structure, component of the 19S regulatory particle (RP/PA700) base subcomplex of the 26S proteasome. The 26S proteasome is composed of a core protease (CP), known as the 20S proteasome, capped at one or both ends by the 19S regulatory particle (RP/PA700). The RP/PA700 complex is composed of at least 17 different subunits in two subcomplexes, the base and the lid, which form the portions proximal and distal to the 20S proteolytic core, respectively. Required for innate immunity. Interacts with UNI. As to expression, preferentially expressed in the root and shoot apical meristem.

Its subcellular location is the cytoplasm. The protein localises to the P-body. The protein resides in the nucleus. Functionally, the 26S protease is involved in the ATP-dependent degradation of ubiquitinated proteins. The regulatory (or ATPase) complex confers ATP dependency and substrate specificity to the 26S complex. Interacts with transit peptides of proteins targeted to the chloroplast, and may be involved in the degradation of unimported plastid protein precursors. Is required for the maintenance of postembryonic root and shoot meristems. Has a specific role in the regulation of organs size. Acts redundantly with RPT2B in the regulation of gametogenesis. With RPT2B plays a critical role in 26S proteasome assembly. Acts as an upstream signaling component for inducing both defense and morphological phenotypes in the constitutive active uni-1D mutant. Acts as a negative regulator of endoreduplication in trichome cells. May function after the completion of the third endoreduplication step (8C to 16C) mediated by RHL1. Acts as a negative regulator of transcriptional gene silencing (TGS) at specific endogenous genes through DNA methylation. Promotes post-transcriptional gene silencing (PTGS) by limiting the degradation of transgene aberrant RNAs by the RNA quality control (RQC) machinery, thus favoring their entry into cytoplasmic siRNA bodies where they can trigger PTGS. Involved in tolerance to zinc deficiency, possibly through alleviation of oxidative stresses or processing of poly-ubiquitinated proteins. Required for resistance to the fungal pathogen Golovinomyces cichoracearum. The sequence is that of 26S proteasome regulatory subunit 4 homolog A from Arabidopsis thaliana (Mouse-ear cress).